The sequence spans 375 residues: 23S rRNA (uracil(747)-C(5))-methyltransferase RlmC (375 aa).

Residues C3, C11, C14, and C87 each coordinate [4Fe-4S] cluster. Residues Q212, F241, E262, and N307 each coordinate S-adenosyl-L-methionine. C334 acts as the Nucleophile in catalysis.

It belongs to the class I-like SAM-binding methyltransferase superfamily. RNA M5U methyltransferase family. RlmC subfamily.

It catalyses the reaction uridine(747) in 23S rRNA + S-adenosyl-L-methionine = 5-methyluridine(747) in 23S rRNA + S-adenosyl-L-homocysteine + H(+). Catalyzes the formation of 5-methyl-uridine at position 747 (m5U747) in 23S rRNA. The sequence is that of 23S rRNA (uracil(747)-C(5))-methyltransferase RlmC from Serratia proteamaculans (strain 568).